Consider the following 120-residue polypeptide: Glycine cleavage system H protein (120 aa).

The 83-residue stretch at 17–99 (VATVGITAHA…QGDGWLYRLK (83 aa)) folds into the Lipoyl-binding domain. Lys-58 is modified (N6-lipoyllysine).

The protein belongs to the GcvH family. In terms of assembly, the glycine cleavage system is composed of four proteins: P, T, L and H. (R)-lipoate serves as cofactor.

Functionally, the glycine cleavage system catalyzes the degradation of glycine. The H protein shuttles the methylamine group of glycine from the P protein to the T protein. This chain is Glycine cleavage system H protein, found in Methylorubrum extorquens (strain PA1) (Methylobacterium extorquens).